The sequence spans 253 residues: uncharacterized protein (253 aa).

2 EamA domains span residues 1 to 97 and 116 to 237; these read MFFM…IYSL and FFWA…ISRL. A run of 8 helical transmembrane segments spans residues 2 to 22, 28 to 48, 53 to 73, 80 to 100, 101 to 121, 138 to 158, 162 to 182, and 214 to 234; these read FFMA…AKQL, IFLL…GLLY, ESAV…TLIL, TEVI…LNLG, IYFS…WALF, AVQL…QFYF, INFL…SFYL, and GVNV…GILI.

The protein belongs to the EamA transporter family.

The protein localises to the cell membrane. This is an uncharacterized protein from Acidianus ambivalens (Desulfurolobus ambivalens).